The following is a 954-amino-acid chain: Xylanolytic transcriptional activator xlnR (954 aa).

Disordered stretches follow at residues 1 to 39 and 51 to 93; these read MSTT…LAEG and REAA…SQRD. The span at 8 to 21 shows a compositional bias: low complexity; that stretch reads HFPHSYSPFSSSRS. The span at 22–33 shows a compositional bias: polar residues; that stretch reads LNRMAQSQTSGL. The segment covering 64 to 78 has biased composition (basic and acidic residues); the sequence is GKPKDQFQVDNDNHH. The segment covering 82–91 has biased composition (polar residues); it reads SLSNFKNPSQ. The zn(2)-C6 fungal-type DNA-binding region spans 119–145; sequence CDQCNQLRTKCDGQNPCAHCIEFGLTC. 4 disordered regions span residues 173–226, 312–332, 566–607, and 758–777; these read ATNS…HSEA, NPQE…STEN, ELPP…PGNT, and MDGS…STVE. Residues 174–183 are compositionally biased toward polar residues; that stretch reads TNSGQPNGSS. The span at 574–590 shows a compositional bias: basic and acidic residues; it reads ARPDAERDGDPDADLSK. A compositionally biased stretch (polar residues) spans 764 to 777; that stretch reads NHVSPSGRSSSTVE.

The protein belongs to the xlnR/xlr1 family.

The protein localises to the nucleus. In terms of biological role, transcriptional activator of the xylanolytic system. Involved in the regulation of extracellular cellulolytic and xylanolytic genes and in the regulation of the intracellular activities of D-xylose catabolic genes in the pentose catabolic pathway (PCP) in response to the presence of D-xylose. This is Xylanolytic transcriptional activator xlnR (xlnR) from Aspergillus fumigatus (strain CBS 144.89 / FGSC A1163 / CEA10) (Neosartorya fumigata).